The chain runs to 590 residues: Aspartate--tRNA(Asp/Asn) ligase (590 aa).

E173 is an L-aspartate binding site. Positions 197-200 (QIFK) are aspartate. L-aspartate is bound at residue R219. ATP contacts are provided by residues 219-221 (RDE) and Q228. An L-aspartate-binding site is contributed by H450. E484 serves as a coordination point for ATP. Position 491 (R491) interacts with L-aspartate. 536 to 539 (GLDR) lines the ATP pocket.

This sequence belongs to the class-II aminoacyl-tRNA synthetase family. Type 1 subfamily. In terms of assembly, homodimer.

The protein resides in the cytoplasm. The enzyme catalyses tRNA(Asx) + L-aspartate + ATP = L-aspartyl-tRNA(Asx) + AMP + diphosphate. Aspartyl-tRNA synthetase with relaxed tRNA specificity since it is able to aspartylate not only its cognate tRNA(Asp) but also tRNA(Asn). Reaction proceeds in two steps: L-aspartate is first activated by ATP to form Asp-AMP and then transferred to the acceptor end of tRNA(Asp/Asn). In Coxiella burnetii (strain RSA 493 / Nine Mile phase I), this protein is Aspartate--tRNA(Asp/Asn) ligase.